We begin with the raw amino-acid sequence, 218 residues long: Probable GTP-binding protein EngB (218 aa).

The EngB-type G domain maps to 44–218; the sequence is DRIEVCFAGR…LRATIATIET (175 aa). GTP is bound by residues 52–59, 79–83, 97–100, 164–167, and 198–200; these read GRSNVGKS, GRTQE, DLPG, TKSD, and TSS. Residues S59 and T81 each contribute to the Mg(2+) site.

The protein belongs to the TRAFAC class TrmE-Era-EngA-EngB-Septin-like GTPase superfamily. EngB GTPase family. Requires Mg(2+) as cofactor.

Necessary for normal cell division and for the maintenance of normal septation. The sequence is that of Probable GTP-binding protein EngB from Jannaschia sp. (strain CCS1).